Consider the following 176-residue polypeptide: NAD(P)H-quinone oxidoreductase subunit 6, chloroplastic (176 aa).

5 helical membrane passes run 10 to 30 (FLLV…VLLP), 32 to 52 (PIYS…FYIL), 61 to 81 (AQLL…VMFI), 92 to 112 (LWTV…VSLI), and 152 to 172 (FFLP…GAIA).

This sequence belongs to the complex I subunit 6 family. In terms of assembly, NDH is composed of at least 16 different subunits, 5 of which are encoded in the nucleus.

Its subcellular location is the plastid. It is found in the chloroplast thylakoid membrane. It carries out the reaction a plastoquinone + NADH + (n+1) H(+)(in) = a plastoquinol + NAD(+) + n H(+)(out). The catalysed reaction is a plastoquinone + NADPH + (n+1) H(+)(in) = a plastoquinol + NADP(+) + n H(+)(out). Its function is as follows. NDH shuttles electrons from NAD(P)H:plastoquinone, via FMN and iron-sulfur (Fe-S) centers, to quinones in the photosynthetic chain and possibly in a chloroplast respiratory chain. The immediate electron acceptor for the enzyme in this species is believed to be plastoquinone. Couples the redox reaction to proton translocation, and thus conserves the redox energy in a proton gradient. In Lactuca sativa (Garden lettuce), this protein is NAD(P)H-quinone oxidoreductase subunit 6, chloroplastic (ndhG).